A 404-amino-acid chain; its full sequence is Cysteine desulfurase IscS (404 aa).

Pyridoxal 5'-phosphate is bound by residues 75–76, Asn155, Gln183, and 203–205; these read AT and TGH. Lys206 carries the post-translational modification N6-(pyridoxal phosphate)lysine. Thr243 provides a ligand contact to pyridoxal 5'-phosphate. Cys328 serves as the catalytic Cysteine persulfide intermediate. A [2Fe-2S] cluster-binding site is contributed by Cys328.

The protein belongs to the class-V pyridoxal-phosphate-dependent aminotransferase family. NifS/IscS subfamily. In terms of assembly, homodimer. Forms a heterotetramer with IscU, interacts with other sulfur acceptors. Pyridoxal 5'-phosphate serves as cofactor.

It is found in the cytoplasm. It carries out the reaction (sulfur carrier)-H + L-cysteine = (sulfur carrier)-SH + L-alanine. It participates in cofactor biosynthesis; iron-sulfur cluster biosynthesis. Its function is as follows. Master enzyme that delivers sulfur to a number of partners involved in Fe-S cluster assembly, tRNA modification or cofactor biosynthesis. Catalyzes the removal of elemental sulfur atoms from cysteine to produce alanine. Functions as a sulfur delivery protein for Fe-S cluster synthesis onto IscU, an Fe-S scaffold assembly protein, as well as other S acceptor proteins. This Enterobacter sp. (strain 638) protein is Cysteine desulfurase IscS.